The sequence spans 325 residues: Probable cell division protein WhiA (325 aa).

A DNA-binding region (H-T-H motif) is located at residues 280 to 313; sequence SLKELGNMLEKPLGKSGVNHRLRKIDKIAEELRK.

Belongs to the WhiA family.

Involved in cell division and chromosome segregation. The chain is Probable cell division protein WhiA from Caldicellulosiruptor bescii (strain ATCC BAA-1888 / DSM 6725 / KCTC 15123 / Z-1320) (Anaerocellum thermophilum).